Here is an 827-residue protein sequence, read N- to C-terminus: Leucine--tRNA ligase (827 aa).

The short motif at 42-52 (PYPSGKLHMGH) is the 'HIGH' region element. Residues 583–587 (KMSKS) carry the 'KMSKS' region motif. Lys586 is an ATP binding site.

This sequence belongs to the class-I aminoacyl-tRNA synthetase family.

The protein localises to the cytoplasm. The enzyme catalyses tRNA(Leu) + L-leucine + ATP = L-leucyl-tRNA(Leu) + AMP + diphosphate. The chain is Leucine--tRNA ligase from Pelotomaculum thermopropionicum (strain DSM 13744 / JCM 10971 / SI).